A 170-amino-acid polypeptide reads, in one-letter code: Ribosome maturation factor RimM (170 aa).

Residues 93 to 165 (PDEFHDHELI…RVVIDPPPGL (73 aa)) enclose the PRC barrel domain.

This sequence belongs to the RimM family. As to quaternary structure, binds ribosomal protein uS19.

It is found in the cytoplasm. Functionally, an accessory protein needed during the final step in the assembly of 30S ribosomal subunit, possibly for assembly of the head region. Essential for efficient processing of 16S rRNA. May be needed both before and after RbfA during the maturation of 16S rRNA. It has affinity for free ribosomal 30S subunits but not for 70S ribosomes. This Thermobifida fusca (strain YX) protein is Ribosome maturation factor RimM.